The primary structure comprises 284 residues: Putative thiosulfate sulfurtransferase SseB (284 aa).

Rhodanese domains are found at residues alanine 20–threonine 138 and glycine 169–glycine 280. Position 183 (arginine 183) interacts with substrate. Cysteine 241 serves as the catalytic Cysteine persulfide intermediate.

It carries out the reaction thiosulfate + hydrogen cyanide = thiocyanate + sulfite + 2 H(+). This is Putative thiosulfate sulfurtransferase SseB (sseB) from Mycobacterium tuberculosis (strain CDC 1551 / Oshkosh).